The chain runs to 283 residues: Acetylglutamate kinase (283 aa).

Residues 63 to 64 (GG), arginine 85, and asparagine 178 contribute to the substrate site.

This sequence belongs to the acetylglutamate kinase family. ArgB subfamily.

Its subcellular location is the cytoplasm. The catalysed reaction is N-acetyl-L-glutamate + ATP = N-acetyl-L-glutamyl 5-phosphate + ADP. Its pathway is amino-acid biosynthesis; L-arginine biosynthesis; N(2)-acetyl-L-ornithine from L-glutamate: step 2/4. Functionally, catalyzes the ATP-dependent phosphorylation of N-acetyl-L-glutamate. The sequence is that of Acetylglutamate kinase from Prochlorococcus marinus (strain AS9601).